The following is a 411-amino-acid chain: MGERRKTRQAEVNIGMVGHVDHGKTTLTKALTGVWTDTHSEELRRGITIKIGFADAEIRRCPNCGRYSTSPVCPYCGHETEFVRRVSFIDAPGHEALMTTMLAGASLMDGAILVIAANEPCPRPQTREHLMALQIIGQKNIIIAQNKIELVDKEKALENYRQIKEFIKGTVAENAPIIPISALHGANIDVLVKAIEDFIPTPKRDPNKPPKMLVLRSFDVNKPGTPPEKLVGGVLGGSIVQGKLKVGDEIEIRPGIPYEEHGRIRYEPITTEIVSLQAGGQFVEEAYPGGLVGVGTKLDPYLTKGDLMAGNVVGKPGKLPPVWDSLRLEVHLLERVVGTEQELRVEPIKRKEVLLLNVGTARTMGLVTNLGKDEIEVKLQIPVCAEPGDRVAISRQIGSRWRLIGYGIIKE.

Residues glutamine 9 to lysine 203 form the tr-type G domain. The G1 stretch occupies residues glycine 18–threonine 25. Aspartate 21, threonine 25, glycine 46, and threonine 48 together coordinate Mg(2+). Aspartate 21–threonine 26 is a binding site for GTP. Positions glycine 46 to lysine 50 are G2. The Zn(2+) site is built by cysteine 61, cysteine 64, cysteine 73, and cysteine 76. Residues aspartate 90–glycine 93 are G3. Residues asparagine 146–glutamate 149 and serine 181–leucine 183 contribute to the GTP site. The G4 stretch occupies residues asparagine 146–glutamate 149. Positions serine 181–leucine 183 are G5.

Belongs to the TRAFAC class translation factor GTPase superfamily. Classic translation factor GTPase family. EIF2G subfamily. Heterotrimer composed of an alpha, a beta and a gamma chain. It depends on Mg(2+) as a cofactor.

The catalysed reaction is GTP + H2O = GDP + phosphate + H(+). EIF-2 functions in the early steps of protein synthesis by forming a ternary complex with GTP and initiator tRNA. In Pyrococcus horikoshii (strain ATCC 700860 / DSM 12428 / JCM 9974 / NBRC 100139 / OT-3), this protein is Translation initiation factor 2 subunit gamma.